The following is a 357-amino-acid chain: Protein-arginine kinase (357 aa).

The region spanning 24-255 is the Phosphagen kinase C-terminal domain; that stretch reads IVISTRLRIA…RQIIEQERVA (232 aa). ATP-binding positions include 27-31, His-92, Arg-126, 177-181, and 208-213; these read STRLR, RASVM, and RGIYGE. The RDXXRA motif of the pArg binding pocket involved in allosteric regulation signature appears at 338–343; that stretch reads RDERRA.

This sequence belongs to the ATP:guanido phosphotransferase family.

It catalyses the reaction L-arginyl-[protein] + ATP = N(omega)-phospho-L-arginyl-[protein] + ADP + H(+). With respect to regulation, appears to be allosterically activated by the binding of pArg-containing polypeptides to the pArg-binding pocket localized in the C-terminal domain of McsB. Functionally, catalyzes the specific phosphorylation of arginine residues in proteins. This Brevibacillus brevis (strain 47 / JCM 6285 / NBRC 100599) protein is Protein-arginine kinase.